The sequence spans 382 residues: Na(+)/H(+) antiporter NhaA (382 aa).

11 consecutive transmembrane segments (helical) span residues 14-34 (AGGI…NSSL), 49-69 (MSVS…LIGL), 87-107 (IFPA…YVAF), 117-137 (GWAI…ALLG), 146-166 (VFLL…IAFF), 171-191 (LSVL…LLNA), 205-225 (FILW…GVVL), 252-272 (VAFA…LEGV), 285-305 (VALG…YLAV), 321-341 (IFAV…ISSL), and 356-376 (LGIL…LSIS).

This sequence belongs to the NhaA Na(+)/H(+) (TC 2.A.33) antiporter family.

The protein resides in the cell inner membrane. The catalysed reaction is Na(+)(in) + 2 H(+)(out) = Na(+)(out) + 2 H(+)(in). Its function is as follows. Na(+)/H(+) antiporter that extrudes sodium in exchange for external protons. This chain is Na(+)/H(+) antiporter NhaA, found in Aliivibrio fischeri (strain ATCC 700601 / ES114) (Vibrio fischeri).